The following is a 518-amino-acid chain: MAAAAAGAAGLMAPASAACSSGSAGAAPGSQGVLIGDRLYSGVLITLENCLLPDDKLRFTPSMSSGLDVDTETGLRVVGCELIQAAGILLRLPQVAMATGQVLFQRFFYTKSFVKHSMEHVSMACVHLASKIEEAPRRIRDVINVFHRLRHLREKKKPVPLVLDQEYVNLKNQIIKAERRVLKELGFCVHVKHPHKIIVMYLQVLECERNQHLVQTAWNYMNDSLRTDVFVRFQPESIACACIYLAARTLEIPLPNRPHWFLLFGATEEEIQEICFKILQLYTRKKVDLTHLESEVEKRKHAIEEAKARAKGLLPGTAPGLDSAAGFSPAPKLESPKEGKGGKPSPPSGKSAKRKMEGPKKAQGHSPVNGLLKGQESRSQSRSREQSYSRSPSRSASPKRRKSDSGSTSGGSKSQSRSRSRSDSPPRQVHRGAPYKGSEVRGSRKSKDCKYLTQKPHKSRSRSSSRSRSRSRERTDNSGKYKKKSHYYRDQRRERSRSYERTGHRYERDHPGHSRHRR.

Cyclin-like stretches follow at residues 81–183 and 196–280; these read ELIQ…RVLK and KIIV…KILQ. A disordered region spans residues 310–518; the sequence is AKGLLPGTAP…DHPGHSRHRR (209 aa). Ser328, Ser335, Ser345, Ser348, and Ser366 each carry phosphoserine. The tract at residues 382 to 420 is RS; the sequence is RSREQSYSRSPSRSASPKRRKSDSGSTSGGSKSQSRSRS. Over residues 405–427 the composition is skewed to low complexity; sequence SGSTSGGSKSQSRSRSRSDSPPR. The span at 438–450 shows a compositional bias: basic and acidic residues; sequence SEVRGSRKSKDCK. The span at 455–469 shows a compositional bias: basic residues; that stretch reads KPHKSRSRSSSRSRS. Basic and acidic residues-rich tracts occupy residues 470–479 and 487–512; these read RSRERTDNSG and YYRDQRRERSRSYERTGHRYERDHPG.

It belongs to the cyclin family. Cyclin L subfamily. Interacts with CDK11A, CDK11B, CDK12, CDK13 and POLR2A, the hyperphosphorylated C-terminal domain (CTD) of RNA polymerase II. May form a ternary complex with CDK11B and casein kinase II (CKII). Interacts with pre-mRNA-splicing factors, including at least SRSF1, SRSF2 and SRSF7/SLU7. As to expression, widely expressed (at protein level).

The protein localises to the nucleus speckle. It is found in the nucleus. Its subcellular location is the nucleoplasm. Its function is as follows. Involved in pre-mRNA splicing. May induce cell death, possibly by acting on the transcription and RNA processing of apoptosis-related factors. The chain is Cyclin-L2 (Ccnl2) from Mus musculus (Mouse).